The primary structure comprises 1183 residues: MAGQVVQYGRHRKRRNYARISEVLELPNLIEIQTKSYEWFLREGLIEMFRDISPIEDFTGNLSLEFVDYRLGEPKYDLEESKNRDATYAAPLRVKVRLIIKETGEVKEQEVFMGDFPLMTDTGTFVINGAERVIVSQLVRSPSVYFNEKIDKNGRENYDATIIPNRGAWLEYETDAKDVVYVRIDRTRKLPLTVLLRALGFSSDQEIVDLLGDNEYLRNTLEKDGTENTEQALLEIYERLRPGEPPTVENAKSLLYSRFFDPKRYDLASVGRYKTNKKLHLKHRLFNQKLAEPIVNTETGEIVVEEGTVLDRRKIDEIMDVLESNANSEVFELHGSVIDEPVEIQSIKVYVPNDDEGRTTTVIGNAFPDSEVKCITPADIIASMSYFFNLLSGIGYTDDIDHLGNRRLRSVGELLQNQFRIGLSRMERVVRERMSIQDTESITPQQLINIRPVIASIKEFFGSSQLSQFMDQANPLAELTYKRRLSALGPGGLTRERAQMEVRDVHYSHYGRMCPIETPEGPNIGLINSLSSYARVNEFGFIETPYRKVDLDTHAITDQIDYLTADEEDSYVVAQANSKLDENGRFMDDEVVCRFRGNNTVMAKEKMDYMDVSPKQVVSAATACIPFLENDDSNRALMGANMQRQAVPLMNPEAPFVGTGMEHVAARDSGAAITAKHRGRVEHVESNEILVRRLVEENGVEHEGELDRYPLAKFKRSNSGTCYNQRPIVAVGDVVEYNEILADGPSMELGEMALGRNVVVGFMTWDGYNYEDAVIMSERLVKDDVYTSIHIEEYESEARDTKLGPEEITRDIPNVSESALKNLDDRGIVYIGAEVKDGDILVGKVTPKGVTELTAEERLLHAIFGEKAREVRDTSLRVPHGAGGIVLDVKVFNREEGDDTLSPGVNQLVRVYIVQKRKIHVGDKMCGRHGNKGVISKIVPEEDMPYLPDGRPIDIMLNPLGVPSRMNIGQVLELHLGMAAKNLGIHVASPVFDGANDDDVWSTIEEAGMARDGKTVLYDGRTGEPFDNRISVGVMYMLKLAHMVDDKLHARSTGPYSLVTQQPLGGKAQFGGQRFGEMEVWALEAYGAAYTLQEILTYKSDDTVGRVKTYEAIVKGENISRPSVPESFRVLMKELQSLGLDVKVMDEQDNEIEMTDVDDDDVVERKVDLQQNDAPETQKEVTD.

Belongs to the RNA polymerase beta chain family. As to quaternary structure, the RNAP catalytic core consists of 2 alpha, 1 beta, 1 beta' and 1 omega subunit. When a sigma factor is associated with the core the holoenzyme is formed, which can initiate transcription.

The catalysed reaction is RNA(n) + a ribonucleoside 5'-triphosphate = RNA(n+1) + diphosphate. Its function is as follows. DNA-dependent RNA polymerase catalyzes the transcription of DNA into RNA using the four ribonucleoside triphosphates as substrates. The chain is DNA-directed RNA polymerase subunit beta from Staphylococcus aureus (strain Mu50 / ATCC 700699).